The sequence spans 607 residues: MENDEQIDETENFAIGKYAILFVIEVSPSMLDPVDEFTPSSLQMALICAYQLAAQRVITNPSDIMGVLLYGTESSTGRFANQMMLLDIDPPDAERIKSLQSFEKDFQFSKEKFKPCSCQVSLSSVLYHCSVIFTTKAENFEKRLFLITDNDHPAWDATERDIILQRAKDLRDLDIQVHPVFLDPPTHSFRINIFYSDFLYIVYGRQDVSNLVNRGQAQLQHMLNMITALQKPKRAHFHLKMDLGNDVRIGVEAFILLKRLESAKTNWVYAKGERFAVAVPQSKQVSFATKKELKKDEIRRSYSYGGSSVVFGSDELNKVRSFEPPTLRIIGFRDFSTLKPWHCLKPAVFLRPKDDEIIGSGAVFSAIHKKLLASNKIGIAWFVSRPNANPCFVAMLATPGSIHIRDDFELPLGIFLVQLPTADDIRSLPPINPNPISMPSNLIETMQRILRGMELRSYQPGKYNNPSLQWHYKVLQALALDEEIPTDFVDNTLPKYKAIQKRVGEYMGDVNNIVAEYRNDISDKNGIKEEEEDQGPIVKKARIEKSGKPIFAEDDRLKQLYIEGVLDKEIKALKVSQLKDILRDRGLRVSGKKADLLDNLTNYVKKL.

The Ku domain maps to 241–452; sequence MDLGNDVRIG…IETMQRILRG (212 aa). In terms of domain architecture, SAP spans 570–604; that stretch reads IKALKVSQLKDILRDRGLRVSGKKADLLDNLTNYV.

The protein belongs to the ku70 family. As to quaternary structure, heterodimer of pku70 and pku80.

The protein localises to the nucleus. The protein resides in the chromosome. It localises to the telomere. The enzyme catalyses ATP + H2O = ADP + phosphate + H(+). Functionally, single-stranded DNA-dependent ATP-dependent helicase. Involved in non-homologous end joining (NHEJ) DNA double strand break repair. DNA-binding is sequence-independent but has a high affinity to nicks in double-stranded DNA and to the ends of duplex DNA. Binds to naturally occurring chromosomal ends, and therefore provides chromosomal end protection. Required also for telomere recombination to repair telomeric ends in the absence of telomerase. ku70, of the ku70/ku80 heterodimer, binds to the stem loop of tlc1, the RNA component of telomerase. Required for mating-type switching. Involved in telomere maintenance. Interacts with telomeric repeats and subtelomeric sequences thereby controlling telomere length and protecting against subtelomeric rearrangement. Maintains telomeric chromatin, which is involved in silencing the expression of genes located at the telomere. The protein is ATP-dependent DNA helicase II subunit 1 (pku70) of Schizosaccharomyces pombe (strain 972 / ATCC 24843) (Fission yeast).